The sequence spans 363 residues: NADH-quinone oxidoreductase subunit H (363 aa).

Transmembrane regions (helical) follow at residues 29-49, 62-82, 96-116, 127-147, 163-183, 202-222, 238-257, 264-286, 299-319, and 339-359; these read VLKI…YVVW, GPMY…KLLF, FIIA…VVPF, VGLL…ILAG, AAQV…VMIA, FFDW…VSGV, EIVA…LFFL, ILVS…QGWV, KGGW…YIWF, and FIPL…YGVI.

Belongs to the complex I subunit 1 family. As to quaternary structure, NDH-1 is composed of 14 different subunits. Subunits NuoA, H, J, K, L, M, N constitute the membrane sector of the complex.

The protein localises to the cell inner membrane. The enzyme catalyses a quinone + NADH + 5 H(+)(in) = a quinol + NAD(+) + 4 H(+)(out). In terms of biological role, NDH-1 shuttles electrons from NADH, via FMN and iron-sulfur (Fe-S) centers, to quinones in the respiratory chain. The immediate electron acceptor for the enzyme in this species is believed to be ubiquinone. Couples the redox reaction to proton translocation (for every two electrons transferred, four hydrogen ions are translocated across the cytoplasmic membrane), and thus conserves the redox energy in a proton gradient. This subunit may bind ubiquinone. In Xanthomonas oryzae pv. oryzae (strain PXO99A), this protein is NADH-quinone oxidoreductase subunit H.